The sequence spans 1037 residues: Ephrin type-A receptor 5 (1037 aa).

An N-terminal signal peptide occupies residues 1–24 (MRGSGPRGAGRRRPPSGGGDTPIT). A disordered region spans residues 1–24 (MRGSGPRGAGRRRPPSGGGDTPIT). Topologically, residues 25–573 (PASLAGCYSA…AASSDQSQIP (549 aa)) are extracellular. An Eph LBD domain is found at 60–238 (EVNLLDSRTV…YYKKCPSVVR (179 aa)). N-linked (GlcNAc...) asparagine glycosylation is found at N264, N299, N369, N423, N436, and N461. Fibronectin type-III domains lie at 357–467 (PPSA…TNQA) and 468–562 (APSP…TTPV). Residues 574 to 594 (VIAVSVTVGVILLAVVIGVLL) form a helical membrane-spanning segment. Topologically, residues 595-1037 (SGSCCECGCG…VQLVNGMVPL (443 aa)) are cytoplasmic. A phosphotyrosine; by autocatalysis mark is found at Y650 and Y656. The 262-residue stretch at 675–936 (ITIERVIGAG…EIVNMLDKLI (262 aa)) folds into the Protein kinase domain. ATP-binding positions include 681-689 (IGAGEFGEV) and K707. D800 acts as the Proton acceptor in catalysis. A phosphotyrosine; by autocatalysis mark is found at Y833 and Y982. One can recognise an SAM domain in the interval 965–1029 (GAYRSVGEWL…MNSLQEMKVQ (65 aa)). A PDZ-binding motif is present at residues 1035-1037 (VPL).

It belongs to the protein kinase superfamily. Tyr protein kinase family. Ephrin receptor subfamily. In terms of assembly, heterotetramer upon binding of the ligand. The heterotetramer is composed of an ephrin dimer and a receptor dimer. Oligomerization is probably required to induce biological responses. Interacts (via SAM domain) with SAMD5 (via SAM domain). In terms of processing, phosphorylated. Phosphorylation is stimulated by the ligand EFNA5. Dephosphorylation upon stimulation by glucose, inhibits EPHA5 forward signaling and results in insulin secretion. In terms of tissue distribution, almost exclusively expressed in the nervous system in cortical neurons, cerebellar Purkinje cells and pyramidal neurons within the cortex and hippocampus. Display an increasing gradient of expression from the forebrain to hindbrain and spinal cord.

Its subcellular location is the cell membrane. It localises to the cell projection. It is found in the axon. The protein localises to the dendrite. It catalyses the reaction L-tyrosyl-[protein] + ATP = O-phospho-L-tyrosyl-[protein] + ADP + H(+). Functionally, receptor tyrosine kinase which binds promiscuously GPI-anchored ephrin-A family ligands residing on adjacent cells, leading to contact-dependent bidirectional signaling into neighboring cells. The signaling pathway downstream of the receptor is referred to as forward signaling while the signaling pathway downstream of the ephrin ligand is referred to as reverse signaling. Among GPI-anchored ephrin-A ligands, EFNA5 most probably constitutes the cognate/functional ligand for EPHA5. Functions as an axon guidance molecule during development and may be involved in the development of the retinotectal, entorhino-hippocampal and hippocamposeptal pathways. Together with EFNA5 plays also a role in synaptic plasticity in adult brain through regulation of synaptogenesis. In addition to its function in the nervous system, the interaction of EPHA5 with EFNA5 mediates communication between pancreatic islet cells to regulate glucose-stimulated insulin secretion. The sequence is that of Ephrin type-A receptor 5 (EPHA5) from Homo sapiens (Human).